Here is a 331-residue protein sequence, read N- to C-terminus: Large ribosomal subunit protein uL3 (331 aa).

This sequence belongs to the universal ribosomal protein uL3 family. In terms of assembly, part of the 50S ribosomal subunit. Forms a cluster with proteins L14 and L24e.

One of the primary rRNA binding proteins, it binds directly near the 3'-end of the 23S rRNA, where it nucleates assembly of the 50S subunit. The protein is Large ribosomal subunit protein uL3 of Thermoplasma acidophilum (strain ATCC 25905 / DSM 1728 / JCM 9062 / NBRC 15155 / AMRC-C165).